The chain runs to 86 residues: MKFLLIGLIRFYQYAISPLIGPRCRFYPSCSHYTLEAIRVHGALRGGYLGARRLLRCHPWHPGGYDPVPERQEQACACHRTAKPGE.

The protein belongs to the UPF0161 family.

The protein localises to the cell inner membrane. In terms of biological role, could be involved in insertion of integral membrane proteins into the membrane. This chain is Putative membrane protein insertion efficiency factor, found in Pseudomonas aeruginosa (strain UCBPP-PA14).